The following is a 156-amino-acid chain: Ribosome maturation factor RimP (156 aa).

Belongs to the RimP family.

It localises to the cytoplasm. Required for maturation of 30S ribosomal subunits. This chain is Ribosome maturation factor RimP, found in Oenococcus oeni (strain ATCC BAA-331 / PSU-1).